The chain runs to 342 residues: Ribosomal RNA small subunit methyltransferase C (342 aa).

This sequence belongs to the methyltransferase superfamily. RsmC family. As to quaternary structure, monomer.

It is found in the cytoplasm. The catalysed reaction is guanosine(1207) in 16S rRNA + S-adenosyl-L-methionine = N(2)-methylguanosine(1207) in 16S rRNA + S-adenosyl-L-homocysteine + H(+). In terms of biological role, specifically methylates the guanine in position 1207 of 16S rRNA in the 30S particle. The polypeptide is Ribosomal RNA small subunit methyltransferase C (Salmonella newport (strain SL254)).